The following is a 66-amino-acid chain: Protein I177L (66 aa).

It belongs to the asfivirus I177L family.

Its subcellular location is the virion. The polypeptide is Protein I177L (African swine fever virus (isolate Tick/Malawi/Lil 20-1/1983) (ASFV)).